The primary structure comprises 357 residues: 3-isopropylmalate dehydrogenase (357 aa).

Position 77–90 (77–90 (GPKWDNLEGSKRPE)) interacts with NAD(+). Substrate-binding residues include Arg97, Arg107, Arg136, and Asp224. Asp224, Asp248, and Asp252 together coordinate Mg(2+). An NAD(+)-binding site is contributed by 282–294 (GSAPDIAGLDIAN).

The protein belongs to the isocitrate and isopropylmalate dehydrogenases family. LeuB type 1 subfamily. As to quaternary structure, homodimer. Mg(2+) serves as cofactor. It depends on Mn(2+) as a cofactor.

The protein localises to the cytoplasm. The catalysed reaction is (2R,3S)-3-isopropylmalate + NAD(+) = 4-methyl-2-oxopentanoate + CO2 + NADH. The protein operates within amino-acid biosynthesis; L-leucine biosynthesis; L-leucine from 3-methyl-2-oxobutanoate: step 3/4. Functionally, catalyzes the oxidation of 3-carboxy-2-hydroxy-4-methylpentanoate (3-isopropylmalate) to 3-carboxy-4-methyl-2-oxopentanoate. The product decarboxylates to 4-methyl-2 oxopentanoate. In Clostridium pasteurianum, this protein is 3-isopropylmalate dehydrogenase (leuB).